Consider the following 256-residue polypeptide: Lysosomal membrane ascorbate-dependent ferrireductase CYB561A3 (256 aa).

Residues 1–3 (MAS) lie on the Cytoplasmic side of the membrane. The helical transmembrane segment at 4–24 (GWFYMSCMVLGSLGSMCILFT) threads the bilayer. A Cytochrome b561 domain is found at 12–219 (VLGSLGSMCI…FGLLVLYILL (208 aa)). Topologically, residues 25-40 (TYWMQYWRGGFAWDGT) are lumenal. The chain crosses the membrane as a helical span at residues 41–61 (VLMFNWHPVLMVSGMVVLYGA). Heme b contacts are provided by histidine 47 and arginine 67. Residues 62–83 (ASLVYRLPASWVGPKLPWKVLH) lie on the Cytoplasmic side of the membrane. 2 residues coordinate L-ascorbate: lysine 76 and lysine 80. Histidine 83 is a binding site for heme b. A helical membrane pass occupies residues 84-104 (AALHLLAFTVTVVGLTAVFGF). Residues 105–119 (HNHSKITHLYSLHSW) are Lumenal-facing. N-linked (GlcNAc...) asparagine glycosylation is present at asparagine 106. Heme b is bound by residues 112–115 (HLYS) and histidine 117. A helical transmembrane segment spans residues 120 to 140 (LGITTVALFACQWFLGFAVFL). Residues 141–154 (LPWASQWLRSLLKP) lie on the Cytoplasmic side of the membrane. Arginine 149 is an L-ascorbate binding site. Residues 155–175 (VHVFFGACILSLSIASVISGI) traverse the membrane as a helical segment. Histidine 156 and glutamate 177 together coordinate heme b. At 176–202 (NEKLFFVLKNATRPYSSLPGEAVFANS) the chain is on the lumenal side. A helical membrane pass occupies residues 203–223 (TGILVVSFGLLVLYILLASSW). Arginine 224 contacts heme b. At 224–256 (RRPDPGALTDRQVWLLVSHYRWDKAKKACFAPC) the chain is on the cytoplasmic side.

As to quaternary structure, homodimer. Requires heme b as cofactor. N-glycosylated.

It is found in the late endosome membrane. The protein resides in the lysosome membrane. It catalyses the reaction Fe(3+)(out) + L-ascorbate(in) = monodehydro-L-ascorbate radical(in) + Fe(2+)(out) + H(+). In terms of biological role, transmembrane reductase that uses ascorbate as an electron donor in the cytoplasm and transfers electrons across membranes to reduce iron cations Fe(3+) into Fe(2+) in the lumen of the late endosome and lysosome. Reduced iron can then be extruded from the late endosome and lysosome to the cytoplasm by divalent metal-specific transporters. It is therefore most probably involved in endosomal and lysosomal cellular iron homeostasis. This Rattus norvegicus (Rat) protein is Lysosomal membrane ascorbate-dependent ferrireductase CYB561A3.